We begin with the raw amino-acid sequence, 204 residues long: Leucyl/phenylalanyl-tRNA--protein transferase (204 aa).

This sequence belongs to the L/F-transferase family.

The protein localises to the cytoplasm. The catalysed reaction is N-terminal L-lysyl-[protein] + L-leucyl-tRNA(Leu) = N-terminal L-leucyl-L-lysyl-[protein] + tRNA(Leu) + H(+). It carries out the reaction N-terminal L-arginyl-[protein] + L-leucyl-tRNA(Leu) = N-terminal L-leucyl-L-arginyl-[protein] + tRNA(Leu) + H(+). It catalyses the reaction L-phenylalanyl-tRNA(Phe) + an N-terminal L-alpha-aminoacyl-[protein] = an N-terminal L-phenylalanyl-L-alpha-aminoacyl-[protein] + tRNA(Phe). In terms of biological role, functions in the N-end rule pathway of protein degradation where it conjugates Leu, Phe and, less efficiently, Met from aminoacyl-tRNAs to the N-termini of proteins containing an N-terminal arginine or lysine. In Rhizobium meliloti (strain 1021) (Ensifer meliloti), this protein is Leucyl/phenylalanyl-tRNA--protein transferase.